The primary structure comprises 367 residues: Histidinol-phosphate aminotransferase (367 aa).

Residue lysine 222 is modified to N6-(pyridoxal phosphate)lysine.

This sequence belongs to the class-II pyridoxal-phosphate-dependent aminotransferase family. Histidinol-phosphate aminotransferase subfamily. It depends on pyridoxal 5'-phosphate as a cofactor.

The catalysed reaction is L-histidinol phosphate + 2-oxoglutarate = 3-(imidazol-4-yl)-2-oxopropyl phosphate + L-glutamate. Its pathway is amino-acid biosynthesis; L-histidine biosynthesis; L-histidine from 5-phospho-alpha-D-ribose 1-diphosphate: step 7/9. The chain is Histidinol-phosphate aminotransferase from Methanosphaera stadtmanae (strain ATCC 43021 / DSM 3091 / JCM 11832 / MCB-3).